Here is a 65-residue protein sequence, read N- to C-terminus: Bacteriocin amylovorin-L (65 aa).

A propeptide spanning residues 1 to 15 (MKQLNSEQLQNIIGG) is cleaved from the precursor. A helical membrane pass occupies residues 39-59 (LGGVWGAVIGGVGGAAVCGLA).

Active lactobin is composed of two different peptides, one which is lactobin A.

Its subcellular location is the secreted. It is found in the host cell membrane. This heat stable bacteriocin inhibits the growth of closely related Lactobacillus species. It may act as a pore-forming protein, creating a channel in the cell membrane. It kills Lactobacillus helveticus ATCC 15009, but displays no activity towards Listeria species. This is Bacteriocin amylovorin-L (amyL) from Lactobacillus amylovorus.